The following is a 259-amino-acid chain: Dysbindin domain-containing protein 2 (259 aa).

2 disordered regions span residues 27 to 56 (SCERVSPPPPLPHFRLPPLPRSRLPGPVSR) and 174 to 259 (ADVF…GACS). The span at 32 to 46 (SPPPPLPHFRLPPLP) shows a compositional bias: pro residues. Residues 205 to 223 (TSDRTTSRTSSSSSSDSST) show a composition bias toward low complexity. Phosphoserine is present on residues S217 and S218. Position 237 is a phosphothreonine (T237). Position 242 is a phosphoserine (S242).

Belongs to the dysbindin family. As to quaternary structure, monomer. Interacts with CSNK1D and CSNK1E. Detected in brain.

May modulate the activity of casein kinase-1. Inhibits CSNK1D autophosphorylation (in vitro). The polypeptide is Dysbindin domain-containing protein 2 (DBNDD2) (Homo sapiens (Human)).